The following is a 122-amino-acid chain: Large ribosomal subunit protein uL14 (122 aa).

Belongs to the universal ribosomal protein uL14 family. In terms of assembly, part of the 50S ribosomal subunit. Forms a cluster with proteins L3 and L19. In the 70S ribosome, L14 and L19 interact and together make contacts with the 16S rRNA in bridges B5 and B8.

Binds to 23S rRNA. Forms part of two intersubunit bridges in the 70S ribosome. The sequence is that of Large ribosomal subunit protein uL14 from Campylobacter lari (strain RM2100 / D67 / ATCC BAA-1060).